The chain runs to 403 residues: Alkaline protease 1 (403 aa).

Residues 1 to 21 (MHSFKRSLLLLGALLPAVFGA) form the signal peptide. The propeptide occupies 22 to 124 (PVEPRRAAEK…QIWYIDALTS (103 aa)). The Inhibitor I9 domain occupies 35-119 (KYIVTFKSGL…HVEEDQIWYI (85 aa)). Positions 129–403 (PWGLGAISHK…NLLAYNGADE (275 aa)) constitute a Peptidase S8 domain. Active-site charge relay system residues include D161 and H192. N252 carries an N-linked (GlcNAc...) asparagine glycan. The Charge relay system role is filled by S348.

Belongs to the peptidase S8 family.

It localises to the secreted. The enzyme catalyses Hydrolysis of proteins with broad specificity, and of Bz-Arg-OEt &gt; Ac-Tyr-OEt. Does not hydrolyze peptide amides.. Its function is as follows. Secreted alkaline protease that allows assimilation of proteinaceous substrates. This is Alkaline protease 1 (alp1) from Emericella nidulans (strain FGSC A4 / ATCC 38163 / CBS 112.46 / NRRL 194 / M139) (Aspergillus nidulans).